The chain runs to 182 residues: Putative manganese efflux pump MntP (182 aa).

6 consecutive transmembrane segments (helical) span residues leucine 6 to glycine 26, isoleucine 37 to valine 57, histidine 71 to leucine 91, isoleucine 101 to leucine 121, isoleucine 131 to isoleucine 151, and tyrosine 162 to isoleucine 182.

Belongs to the MntP (TC 9.B.29) family.

The protein resides in the cell membrane. In terms of biological role, probably functions as a manganese efflux pump. The chain is Putative manganese efflux pump MntP from Bacillus thuringiensis subsp. konkukian (strain 97-27).